Reading from the N-terminus, the 1163-residue chain is Receptor-type guanylate cyclase gcy-21 (1163 aa).

The N-terminal stretch at 1 to 17 (MLSAVLLLLFFIQNVQN) is a signal peptide. The Extracellular portion of the chain corresponds to 18 to 490 (FDKIELEDIT…ENCGPPANNT (473 aa)). 6 N-linked (GlcNAc...) asparagine glycosylation sites follow: asparagine 102, asparagine 296, asparagine 322, asparagine 346, asparagine 466, and asparagine 488. Residues 491 to 511 (FIIVISVGVAVLIGLAIAAAF) traverse the membrane as a helical segment. The Cytoplasmic segment spans residues 512–1163 (LYKRYRYERR…QIQEKTYEFS (652 aa)). In terms of domain architecture, Protein kinase spans 587 to 882 (FNTGSTARAG…QIKRKLKPLT (296 aa)). ATP is bound by residues 593 to 601 (ARAGPFGPI) and lysine 635. The stretch at 901 to 930 (TDKLEKDIAERNEELEGEKAKSEALLKMML) forms a coiled coil. In terms of domain architecture, Guanylate cyclase spans 953–1083 (TVFFSDCPGF…DTVNTASRME (131 aa)).

The protein belongs to the adenylyl cyclase class-4/guanylyl cyclase family. As to expression, expressed in ASG sensory neurons.

The protein resides in the cell membrane. The catalysed reaction is GTP = 3',5'-cyclic GMP + diphosphate. Guanylate cyclase involved in the production of the second messenger cGMP. Plays a role in dauer formation. The sequence is that of Receptor-type guanylate cyclase gcy-21 from Caenorhabditis elegans.